The sequence spans 1008 residues: Collagen alpha-2(I) chain (1008 aa).

A disordered region spans residues 1–999; that stretch reads GGFDFSFLPQ…IRGSGGGYDF (999 aa). Residues proline 9, proline 12, proline 45, and proline 51 each carry the 4-hydroxyproline modification. Low complexity predominate over residues 38-81; the sequence is LMGPRGPPGASGAPGPQGFPAGEPGEPGQTGPAGARGPAGPPGK. Positions 82 to 94 are enriched in basic and acidic residues; the sequence is ADGHPGKPGRPGE. Lysine 116 carries the 5-hydroxylysine; alternate modification. The O-linked (Gal...) hydroxylysine; alternate glycan is linked to lysine 116. Composition is skewed to low complexity over residues 164-193, 239-260, and 301-314; these read VGAPGPAGARGSDGSVGPVGPAGPIGSAGP, PGANGLTGAKGAAGLPGVAGAP, and EPGSAGPQGPPGSS. The segment covering 336-345 has biased composition (gly residues); that stretch reads GLRGGPGSRG. Residues 358-374 are compositionally biased toward low complexity; sequence PAGARGASGPAGVRGPS. Proline 380 and proline 383 each carry 4-hydroxyproline. The span at 409–428 shows a compositional bias: low complexity; the sequence is LPGIDGRPGPIGPAGARGEA. Over residues 455-466 the composition is skewed to gly residues; sequence GNRGQGGKGEQG. Composition is skewed to low complexity over residues 513–530 and 542–552; these read PGESGAVGPSGAIGSRGP and EPGVVGAPGTA. The segment covering 553-562 has biased composition (gly residues); that stretch reads GPAGSGGLPG. Low complexity-rich tracts occupy residues 582-629 and 636-656; these read RGEV…PRGS and VGPAGPNGFAGPAGAAGQPGA. Positions 657–666 are enriched in basic and acidic residues; that stretch reads KGERGTKGPK. The segment covering 674–684 has biased composition (low complexity); sequence PTGPVGSAGPA. Over residues 694-703 the composition is skewed to gly residues; that stretch reads GSRGDGGPPG. Over residues 704–714 the composition is skewed to low complexity; it reads ATGFPGAAGRT. Gly residues predominate over residues 751 to 760; the sequence is GETGAGGPPG. Low complexity-rich tracts occupy residues 768–795, 803–813, 826–842, 862–884, and 892–907; these read SGEPGTAGPPGTAGPQGLLGAPGILGLP, LPGVAGAVGEP, PPGAVGSPGVNGAPGNP, YAGNAGPVGAAGAPGPHGTVGPA, and EPGPVGSVGPVGALGP. Over residues 917 to 928 the composition is skewed to basic and acidic residues; that stretch reads RGDKGEPGDKGP. Residues 989–998 are compositionally biased toward gly residues; the sequence is GIRGSGGGYD.

The protein belongs to the fibrillar collagen family. Trimers of one alpha 2(I) and two alpha 1(I) chains. Interacts (via C-terminus) with TMEM131 (via PapD-L domain); the interaction is direct and is involved in assembly and TRAPPIII ER-to-Golgi transport complex-dependent secretion of collagen. Post-translationally, prolines at the third position of the tripeptide repeating unit (G-X-Y) are hydroxylated in some or all of the chains. Expressed in bones.

The protein resides in the secreted. Its subcellular location is the extracellular space. It is found in the extracellular matrix. Type I collagen is a member of group I collagen (fibrillar forming collagen). The sequence is that of Collagen alpha-2(I) chain from Nothrotheriops shastensis (Shasta ground sloth).